The following is a 310-amino-acid chain: Cytochrome P450 monooxygenase ppzG (310 aa).

Heme is bound at residue Cys-288.

The protein belongs to the cytochrome P450 family. Heme serves as cofactor.

Its pathway is secondary metabolite biosynthesis. Its function is as follows. Cytochrome P450 monooxygenase; part of the gene cluster that mediates the biosynthesis of pyrrolopyrazines, secondary metabolites showing insecticidal activity. The role of ppzG within the pathway has still to be determined. The single multifunctional NRPS ppzA is sufficient to produce peramine via condensation of 1-pyrroline-5-carboxylate and arginine, N-methylation of the alpha-amino group of arginine and reduction of the thioester and the cyclization to form an iminium ion resulting in release from the peptide synthetase. Deprotonation of this intermediate and oxidation of the pyrroline ring would give rise to peramine. In Epichloe species that produce only peramine, the peramine synthetase gene is not localized in a gene cluster, in contrast to Metarhizium species that contain additional pyrrolopyrazine biosynthesis genes. The 2-oxoglutarate-Fe(II) type oxidoreductase ppzC hydroxylates peramine to yield the newly identified compound 8-hydroxyperamine whereas ppzD converts L-proline into trans-4-hydroxy-L-proline, a precursor of peramine biosynthesis. The sequence is that of Cytochrome P450 monooxygenase ppzG (ppzG) from Metarhizium majus (strain ARSEF 297).